A 184-amino-acid polypeptide reads, in one-letter code: Ribosome-recycling factor (184 aa).

The disordered stretch occupies residues 133–153 (DSNDELKKQQKNSDITEDDLR).

This sequence belongs to the RRF family.

Its subcellular location is the cytoplasm. Functionally, responsible for the release of ribosomes from messenger RNA at the termination of protein biosynthesis. May increase the efficiency of translation by recycling ribosomes from one round of translation to another. This is Ribosome-recycling factor from Staphylococcus saprophyticus subsp. saprophyticus (strain ATCC 15305 / DSM 20229 / NCIMB 8711 / NCTC 7292 / S-41).